Consider the following 127-residue polypeptide: Large ribosomal subunit protein uL22 (127 aa).

As to quaternary structure, part of the 50S ribosomal subunit.

This protein binds specifically to 23S rRNA; its binding is stimulated by other ribosomal proteins, e.g. L4, L17, and L20. It is important during the early stages of 50S assembly. It makes multiple contacts with different domains of the 23S rRNA in the assembled 50S subunit and ribosome. Its function is as follows. The globular domain of the protein is located near the polypeptide exit tunnel on the outside of the subunit, while an extended beta-hairpin is found that lines the wall of the exit tunnel in the center of the 70S ribosome. This chain is Large ribosomal subunit protein uL22, found in Rhodopseudomonas palustris (strain ATCC BAA-98 / CGA009).